The primary structure comprises 369 residues: Phosphoribosylformylglycinamidine cyclo-ligase (369 aa).

A disordered region spans residues 1-22 (MSKRDTSQPKTGQPKTSKRRNG).

Belongs to the AIR synthase family.

It localises to the cytoplasm. It catalyses the reaction 2-formamido-N(1)-(5-O-phospho-beta-D-ribosyl)acetamidine + ATP = 5-amino-1-(5-phospho-beta-D-ribosyl)imidazole + ADP + phosphate + H(+). It functions in the pathway purine metabolism; IMP biosynthesis via de novo pathway; 5-amino-1-(5-phospho-D-ribosyl)imidazole from N(2)-formyl-N(1)-(5-phospho-D-ribosyl)glycinamide: step 2/2. In Mesorhizobium japonicum (strain LMG 29417 / CECT 9101 / MAFF 303099) (Mesorhizobium loti (strain MAFF 303099)), this protein is Phosphoribosylformylglycinamidine cyclo-ligase.